The following is a 218-amino-acid chain: Histidine biosynthesis bifunctional protein HisIE (218 aa).

A phosphoribosyl-AMP cyclohydrolase region spans residues 1-118 (MTDLSELNFD…DAPDTGLDGT (118 aa)). Positions 119-218 (LERVYATITE…SGLKGPKEVG (100 aa)) are phosphoribosyl-ATP pyrophosphohydrolase.

It in the N-terminal section; belongs to the PRA-CH family. In the C-terminal section; belongs to the PRA-PH family.

It localises to the cytoplasm. It carries out the reaction 1-(5-phospho-beta-D-ribosyl)-ATP + H2O = 1-(5-phospho-beta-D-ribosyl)-5'-AMP + diphosphate + H(+). The enzyme catalyses 1-(5-phospho-beta-D-ribosyl)-5'-AMP + H2O = 1-(5-phospho-beta-D-ribosyl)-5-[(5-phospho-beta-D-ribosylamino)methylideneamino]imidazole-4-carboxamide. The protein operates within amino-acid biosynthesis; L-histidine biosynthesis; L-histidine from 5-phospho-alpha-D-ribose 1-diphosphate: step 2/9. Its pathway is amino-acid biosynthesis; L-histidine biosynthesis; L-histidine from 5-phospho-alpha-D-ribose 1-diphosphate: step 3/9. The chain is Histidine biosynthesis bifunctional protein HisIE (hisI) from Deinococcus radiodurans (strain ATCC 13939 / DSM 20539 / JCM 16871 / CCUG 27074 / LMG 4051 / NBRC 15346 / NCIMB 9279 / VKM B-1422 / R1).